Here is a 328-residue protein sequence, read N- to C-terminus: tRNA uridine(34) hydroxylase (328 aa).

The Rhodanese domain occupies 130–224; it reads LDEDTVVLDT…YGKDPEVQGE (95 aa). Catalysis depends on cysteine 184, which acts as the Cysteine persulfide intermediate.

This sequence belongs to the TrhO family.

The catalysed reaction is uridine(34) in tRNA + AH2 + O2 = 5-hydroxyuridine(34) in tRNA + A + H2O. Functionally, catalyzes oxygen-dependent 5-hydroxyuridine (ho5U) modification at position 34 in tRNAs. The chain is tRNA uridine(34) hydroxylase from Streptococcus pyogenes serotype M6 (strain ATCC BAA-946 / MGAS10394).